The chain runs to 453 residues: Zinc finger protein Pegasus (453 aa).

C2H2-type zinc fingers lie at residues Leu-101 to His-123, His-129 to His-151, and Tyr-157 to His-180. Positions Gly-279 to Ser-293 are enriched in polar residues. Positions Gly-279–Pro-375 are disordered. The segment covering Cys-315 to Pro-332 has biased composition (low complexity). The span at Arg-356 to Ser-368 shows a compositional bias: polar residues. 2 consecutive C2H2-type zinc fingers follow at residues His-383–His-405 and Phe-411–His-438.

This sequence belongs to the Ikaros C2H2-type zinc-finger protein family. Probably self-associates.

The protein localises to the nucleus. Functionally, transcriptional repressor that binds the core 5'GNNTGTNG-3' DNA consensus sequence. This Xenopus laevis (African clawed frog) protein is Zinc finger protein Pegasus (ikzf5).